The sequence spans 591 residues: N-acetylgalactosaminyltransferase 7 (591 aa).

The Cytoplasmic segment spans residues 1–11; the sequence is MRVSTIRSGRI. Residues 12–29 traverse the membrane as a helical; Signal-anchor for type II membrane protein segment; the sequence is CRLALCLLVLLPLLYLLA. N30 is a glycosylation site (N-linked (GlcNAc...) asparagine). At 30 to 591 the chain is on the lumenal side; it reads NWSDHHKRVQ…WWFKEIRPRW (562 aa). Residues 68 to 100 are disordered; the sequence is DGLGNFEPKDVKPRSGPGENGEAHSLSPDKKHM. Cystine bridges form between C132-C367, C358-C441, C479-C496, C519-C532, and C558-C573. Residues 141–251 form a catalytic subdomain A region; that stretch reads LPRTSVIIVF…TNWLPPLLAP (111 aa). Substrate-binding residues include D182 and R212. 2 residues coordinate Mn(2+): D235 and H237. The interval 313 to 375 is catalytic subdomain B; sequence PYRSPTHAGG…PCSRVGHVYR (63 aa). A substrate-binding site is contributed by W344. Position 372 (H372) interacts with Mn(2+). The substrate site is built by R375 and Y380. Residues 466 to 585 enclose the Ricin B-type lectin domain; sequence LHWGELRSVA…NDSYQQWWFK (120 aa). N576 carries an N-linked (GlcNAc...) asparagine glycan.

Belongs to the glycosyltransferase 2 family. GalNAc-T subfamily. The cofactor is Mn(2+). As to expression, expressed in developing oocytes and egg chambers. During embryonic stages 9-11, expressed in the primordium of the foregut, midgut and hindgut. Expressed in the salivary glands from embryonic stage 12 onwards. During embryonic stages 12-13, expressed in the posterior midgut and hindgut. During embryonic stages 14-15, expression continues in the hindgut. During embryonic stages 16-17, expressed in the antennomaxillary complex. In third instar larvae, ubiquitously expressed in wing, with increased expression in the notum and ventral wing pouch, eye-antennal, leg and haltere imaginal disks.

It localises to the golgi apparatus membrane. It carries out the reaction L-seryl-[protein] + UDP-N-acetyl-alpha-D-galactosamine = a 3-O-[N-acetyl-alpha-D-galactosaminyl]-L-seryl-[protein] + UDP + H(+). The enzyme catalyses L-threonyl-[protein] + UDP-N-acetyl-alpha-D-galactosamine = a 3-O-[N-acetyl-alpha-D-galactosaminyl]-L-threonyl-[protein] + UDP + H(+). It functions in the pathway protein modification; protein glycosylation. Glycopeptide transferase involved in O-linked oligosaccharide biosynthesis, which catalyzes the transfer of an N-acetyl-D-galactosamine residue to an already glycosylated peptide. In contrast to other proteins of the family, it does not act as a peptide transferase that transfers GalNAc onto serine or threonine residue on the protein receptor, but instead requires the prior addition of a GalNAc on a peptide before adding additional GalNAc moieties. Some peptide transferase activity is however not excluded, considering that its appropriate peptide substrate may remain unidentified. Prefers the monoglycosylated Muc5AC-3 as substrate. Might have a role in protein O-glycosylation in the Golgi and thereby in establishing and/or maintaining a proper secretory apparatus structure. This Drosophila melanogaster (Fruit fly) protein is N-acetylgalactosaminyltransferase 7.